A 97-amino-acid chain; its full sequence is Co-chaperonin GroES (97 aa).

The protein belongs to the GroES chaperonin family. In terms of assembly, heptamer of 7 subunits arranged in a ring. Interacts with the chaperonin GroEL.

Its subcellular location is the cytoplasm. In terms of biological role, together with the chaperonin GroEL, plays an essential role in assisting protein folding. The GroEL-GroES system forms a nano-cage that allows encapsulation of the non-native substrate proteins and provides a physical environment optimized to promote and accelerate protein folding. GroES binds to the apical surface of the GroEL ring, thereby capping the opening of the GroEL channel. The protein is Co-chaperonin GroES of Oleispira antarctica.